Reading from the N-terminus, the 160-residue chain is S-adenosylmethionine decarboxylase proenzyme (160 aa).

Serine 73 (schiff-base intermediate with substrate; via pyruvic acid) is an active-site residue. A Pyruvic acid (Ser); by autocatalysis modification is found at serine 73. Histidine 78 functions as the Proton acceptor; for processing activity in the catalytic mechanism. Cysteine 93 functions as the Proton donor; for catalytic activity in the catalytic mechanism.

The protein belongs to the prokaryotic AdoMetDC family. Type 1 subfamily. Heterotetramer of two alpha and two beta chains arranged as a dimer of alpha/beta heterodimers. The cofactor is pyruvate. In terms of processing, is synthesized initially as an inactive proenzyme. Formation of the active enzyme involves a self-maturation process in which the active site pyruvoyl group is generated from an internal serine residue via an autocatalytic post-translational modification. Two non-identical subunits are generated from the proenzyme in this reaction, and the pyruvate is formed at the N-terminus of the alpha chain, which is derived from the carboxyl end of the proenzyme. The post-translation cleavage follows an unusual pathway, termed non-hydrolytic serinolysis, in which the side chain hydroxyl group of the serine supplies its oxygen atom to form the C-terminus of the beta chain, while the remainder of the serine residue undergoes an oxidative deamination to produce ammonia and the pyruvoyl group blocking the N-terminus of the alpha chain.

It catalyses the reaction S-adenosyl-L-methionine + H(+) = S-adenosyl 3-(methylsulfanyl)propylamine + CO2. Its pathway is amine and polyamine biosynthesis; S-adenosylmethioninamine biosynthesis; S-adenosylmethioninamine from S-adenosyl-L-methionine: step 1/1. Functionally, catalyzes the decarboxylation of S-adenosylmethionine to S-adenosylmethioninamine (dcAdoMet), the propylamine donor required for the synthesis of the polyamines spermine and spermidine from the diamine putrescine. This chain is S-adenosylmethionine decarboxylase proenzyme, found in Pseudomonas aeruginosa (strain LESB58).